The sequence spans 220 residues: Deoxyribose-phosphate aldolase (220 aa).

Asp-89 (proton donor/acceptor) is an active-site residue. Catalysis depends on Lys-151, which acts as the Schiff-base intermediate with acetaldehyde. Residue Lys-180 is the Proton donor/acceptor of the active site.

Belongs to the DeoC/FbaB aldolase family. DeoC type 1 subfamily.

The protein localises to the cytoplasm. The catalysed reaction is 2-deoxy-D-ribose 5-phosphate = D-glyceraldehyde 3-phosphate + acetaldehyde. Its pathway is carbohydrate degradation; 2-deoxy-D-ribose 1-phosphate degradation; D-glyceraldehyde 3-phosphate and acetaldehyde from 2-deoxy-alpha-D-ribose 1-phosphate: step 2/2. In terms of biological role, catalyzes a reversible aldol reaction between acetaldehyde and D-glyceraldehyde 3-phosphate to generate 2-deoxy-D-ribose 5-phosphate. This Streptococcus pneumoniae (strain CGSP14) protein is Deoxyribose-phosphate aldolase.